A 3084-amino-acid polypeptide reads, in one-letter code: Protein prune homolog 2 (3084 aa).

Position 1 is an N-acetylmethionine (Met-1). The short motif at 109-111 is the DHH motif element; sequence GSH. 18 disordered regions span residues 394–417, 430–465, 500–536, 672–733, 811–837, 861–907, 947–1080, 1224–1316, 1338–1395, 1502–1543, 1600–1652, 1776–1799, 1836–1886, 1961–1980, 2071–2196, 2410–2782, 2797–2816, and 2825–2859; these read QPSS…QADG, TIRS…PGFD, ASEQ…PKGL, EQES…QKEE, KNTW…MGQS, EIWG…KATG, SASN…DDPS, NMPS…GQSE, SGVN…LEVE, MNST…DLHD, GFGK…TTKR, ETGT…DPDK, GELE…GDKS, DENG…QENQ, ILTH…NPEV, MLLS…SHPR, QSEG…EIDI, and DEAD…AEEE. Positions 501–511 are enriched in polar residues; it reads SEQSQPSSHSA. Composition is skewed to basic and acidic residues over residues 682–696 and 723–733; these read PWKD…RRTS and GNKEAQDQKEE. Polar residues-rich tracts occupy residues 811-828 and 865-891; these read KNTW…SGQE and KNNS…NNSK. Low complexity predominate over residues 962 to 975; sequence TNYSTSDSYTSPTY. Positions 977-999 are enriched in basic and acidic residues; the sequence is GDEKEIANKPVDKDNGFEAKDAE. Residues 1009–1019 are compositionally biased toward polar residues; sequence ATSSQQSQRNR. Basic and acidic residues predominate over residues 1034–1063; that stretch reads HTEDKPEGNDAHHPDSDALKTEHAEDKNAS. The segment covering 1071 to 1080 has biased composition (low complexity); that stretch reads SSPSSYDDPS. The segment covering 1248–1261 has biased composition (basic and acidic residues); it reads SPRHSNGKDSHMLE. Over residues 1265–1294 the composition is skewed to polar residues; sequence LSESGGLTSQPVNQDTWGDSQGDTASSVTG. A compositionally biased stretch (basic and acidic residues) spans 1350-1366; the sequence is KPRDQEFSSSDAFEHQD. The span at 1368–1378 shows a compositional bias: low complexity; sequence SSASGKISSLS. Composition is skewed to polar residues over residues 1779–1792, 1854–1869, and 1965–1980; these read TMDT…STEA, PIQN…STNP, and CVST…QENQ. Residues 2089–2103 are compositionally biased toward basic and acidic residues; sequence VCHDSEGEQKMEKHT. A compositionally biased stretch (low complexity) spans 2162–2174; sequence SSKPASSRSSPEP. 3 stretches are compositionally biased toward basic and acidic residues: residues 2416–2428, 2506–2525, and 2535–2553; these read PDHR…ETNI, KQTE…EDHQ, and SHEK…RENI. Over residues 2569 to 2584 the composition is skewed to polar residues; that stretch reads PETQLSGTPDTCQSEF. Residues 2595 to 2606 are compositionally biased toward low complexity; the sequence is RMSSSSNHESAS. The span at 2607–2617 shows a compositional bias: polar residues; it reads LENPAQDQSWM. Over residues 2653–2664 the composition is skewed to basic and acidic residues; sequence KGPKSQVLERNK. Over residues 2806-2816 the composition is skewed to acidic residues; that stretch reads DNLDSPDEIDI. Positions 2840 to 2849 are enriched in polar residues; sequence ANKSSGQESE. The region spanning 2879-3040 is the CRAL-TRIO domain; sequence DMKVIEPYRR…SIIKYDEEKS (162 aa).

This sequence belongs to the PPase class C family. Prune subfamily.

It localises to the cytoplasm. Its function is as follows. May play an important role in regulating differentiation, survival and aggressiveness of the tumor cells. The sequence is that of Protein prune homolog 2 (Prune2) from Mus musculus (Mouse).